The primary structure comprises 106 residues: UPF0473 protein LSEI_0788 (106 aa).

The protein belongs to the UPF0473 family.

The chain is UPF0473 protein LSEI_0788 from Lacticaseibacillus paracasei (strain ATCC 334 / BCRC 17002 / CCUG 31169 / CIP 107868 / KCTC 3260 / NRRL B-441) (Lactobacillus paracasei).